A 279-amino-acid chain; its full sequence is Large ribosomal subunit protein uL2 (279 aa).

Positions 222 to 264 (GVAMNPVDHPHGGGEGRTSGGRNPVTPAGKPTKGAKTRVNKAT) are disordered.

It belongs to the universal ribosomal protein uL2 family. Part of the 50S ribosomal subunit. Forms a bridge to the 30S subunit in the 70S ribosome.

Its function is as follows. One of the primary rRNA binding proteins. Required for association of the 30S and 50S subunits to form the 70S ribosome, for tRNA binding and peptide bond formation. It has been suggested to have peptidyltransferase activity; this is somewhat controversial. Makes several contacts with the 16S rRNA in the 70S ribosome. This is Large ribosomal subunit protein uL2 from Caulobacter sp. (strain K31).